The primary structure comprises 906 residues: Protein translocase subunit SecA (906 aa).

ATP-binding positions include Gln-86, 104–108 (GEGKT), and Asp-499. Positions 890, 892, 901, and 902 each coordinate Zn(2+).

This sequence belongs to the SecA family. As to quaternary structure, monomer and homodimer. Part of the essential Sec protein translocation apparatus which comprises SecA, SecYEG and auxiliary proteins SecDF-YajC and YidC. Requires Zn(2+) as cofactor.

It localises to the cell inner membrane. It is found in the cytoplasm. The catalysed reaction is ATP + H2O + cellular proteinSide 1 = ADP + phosphate + cellular proteinSide 2.. Its function is as follows. Part of the Sec protein translocase complex. Interacts with the SecYEG preprotein conducting channel. Has a central role in coupling the hydrolysis of ATP to the transfer of proteins into and across the cell membrane, serving both as a receptor for the preprotein-SecB complex and as an ATP-driven molecular motor driving the stepwise translocation of polypeptide chains across the membrane. In Rickettsia prowazekii (strain Madrid E), this protein is Protein translocase subunit SecA.